Reading from the N-terminus, the 148-residue chain is Putative pre-16S rRNA nuclease (148 aa).

It belongs to the YqgF nuclease family.

It localises to the cytoplasm. Its function is as follows. Could be a nuclease involved in processing of the 5'-end of pre-16S rRNA. This Chlamydia trachomatis serovar L2 (strain ATCC VR-902B / DSM 19102 / 434/Bu) protein is Putative pre-16S rRNA nuclease.